The primary structure comprises 504 residues: UDP-N-acetylmuramoylalanine--D-glutamate ligase (504 aa).

129–135 (GTNGKTT) provides a ligand contact to ATP.

Belongs to the MurCDEF family.

The protein localises to the cytoplasm. It catalyses the reaction UDP-N-acetyl-alpha-D-muramoyl-L-alanine + D-glutamate + ATP = UDP-N-acetyl-alpha-D-muramoyl-L-alanyl-D-glutamate + ADP + phosphate + H(+). Its pathway is cell wall biogenesis; peptidoglycan biosynthesis. Cell wall formation. Catalyzes the addition of glutamate to the nucleotide precursor UDP-N-acetylmuramoyl-L-alanine (UMA). The sequence is that of UDP-N-acetylmuramoylalanine--D-glutamate ligase from Burkholderia thailandensis (strain ATCC 700388 / DSM 13276 / CCUG 48851 / CIP 106301 / E264).